The chain runs to 426 residues: Gamma-glutamyl phosphate reductase (426 aa).

This sequence belongs to the gamma-glutamyl phosphate reductase family.

It is found in the cytoplasm. It catalyses the reaction L-glutamate 5-semialdehyde + phosphate + NADP(+) = L-glutamyl 5-phosphate + NADPH + H(+). It functions in the pathway amino-acid biosynthesis; L-proline biosynthesis; L-glutamate 5-semialdehyde from L-glutamate: step 2/2. Its function is as follows. Catalyzes the NADPH-dependent reduction of L-glutamate 5-phosphate into L-glutamate 5-semialdehyde and phosphate. The product spontaneously undergoes cyclization to form 1-pyrroline-5-carboxylate. The polypeptide is Gamma-glutamyl phosphate reductase (Delftia acidovorans (strain DSM 14801 / SPH-1)).